The following is a 168-amino-acid chain: Ribosome maturation factor RimM (168 aa).

In terms of domain architecture, PRC barrel spans 97–168; it reads PNEYYYYELL…RLVVKVPEWI (72 aa).

This sequence belongs to the RimM family. In terms of assembly, binds ribosomal protein uS19.

Its subcellular location is the cytoplasm. Functionally, an accessory protein needed during the final step in the assembly of 30S ribosomal subunit, possibly for assembly of the head region. Essential for efficient processing of 16S rRNA. May be needed both before and after RbfA during the maturation of 16S rRNA. It has affinity for free ribosomal 30S subunits but not for 70S ribosomes. The protein is Ribosome maturation factor RimM of Pseudothermotoga lettingae (strain ATCC BAA-301 / DSM 14385 / NBRC 107922 / TMO) (Thermotoga lettingae).